Reading from the N-terminus, the 428-residue chain is Citrate synthase (428 aa).

Catalysis depends on residues H265, H306, and D363.

It belongs to the citrate synthase family. As to quaternary structure, homohexamer.

It carries out the reaction oxaloacetate + acetyl-CoA + H2O = citrate + CoA + H(+). The protein operates within carbohydrate metabolism; tricarboxylic acid cycle; isocitrate from oxaloacetate: step 1/2. With respect to regulation, allosterically inhibited by NADH. The sequence is that of Citrate synthase (gltA) from Pseudomonas aeruginosa (strain ATCC 15692 / DSM 22644 / CIP 104116 / JCM 14847 / LMG 12228 / 1C / PRS 101 / PAO1).